A 350-amino-acid polypeptide reads, in one-letter code: MDDNKKKALAAALGQIERQFGKGAVMRMGDHDRQAIPAISTGSLGLDIALGIGGLPKGRIVEIYGPESSGKTTLTLSVIAQAQKAGATCAFVDAEHALDPEYAGKLGVNVDDLLVSQPDTGEQALEITDMLVRSNAVDVIIVDSVAALVPKAEIEGEMGDMHVGLQARLMSQALRKITGNIKNANCLVIFINQIRMKIGVMFGSPETTTGGNALKFYASVRLDIRRTGAVKEGDEVVGSETRVKIVKNKVAPPFRQAEFQILYGKGIYLNGEIIDLGVLHGFLEKSGAWYSYQGNKIGQGKANSAKFLQDNPEIGNALEKQIREKLLTASPDVKANPVKETEDDMADADI.

65–72 contributes to the ATP binding site; the sequence is GPESSGKT. Positions 329-350 are disordered; it reads ASPDVKANPVKETEDDMADADI. Residues 341–350 are compositionally biased toward acidic residues; it reads TEDDMADADI.

It belongs to the RecA family.

It is found in the cytoplasm. Functionally, can catalyze the hydrolysis of ATP in the presence of single-stranded DNA, the ATP-dependent uptake of single-stranded DNA by duplex DNA, and the ATP-dependent hybridization of homologous single-stranded DNAs. It interacts with LexA causing its activation and leading to its autocatalytic cleavage. The chain is Protein RecA from Pseudomonas fluorescens (strain ATCC BAA-477 / NRRL B-23932 / Pf-5).